The following is a 122-amino-acid chain: MAITKQDVLEFISGLSVLELSELVKEFEEKFGVSAQPVAVAGGAVAAVAVEEQTEFNVIITDAGDKKINVIKVVRALTGLGLKEAKDATENVPSTIKEGVDKETAMNAKKELEEAGAKVEVK.

Belongs to the bacterial ribosomal protein bL12 family. As to quaternary structure, homodimer. Part of the ribosomal stalk of the 50S ribosomal subunit. Forms a multimeric L10(L12)X complex, where L10 forms an elongated spine to which 2 to 4 L12 dimers bind in a sequential fashion. Binds GTP-bound translation factors.

Functionally, forms part of the ribosomal stalk which helps the ribosome interact with GTP-bound translation factors. Is thus essential for accurate translation. The protein is Large ribosomal subunit protein bL12 of Sulfurimonas denitrificans (strain ATCC 33889 / DSM 1251) (Thiomicrospira denitrificans (strain ATCC 33889 / DSM 1251)).